Consider the following 317-residue polypeptide: 17-beta-hydroxysteroid dehydrogenase type 6 (317 aa).

The signal sequence occupies residues 1 to 17 (MWFYLVTLVGLYHLLRW). 33-57 (FITGCDSGFGNLLARQLDRRGMRVL) is an NAD(+) binding site. N71 and N161 each carry an N-linked (GlcNAc...) asparagine glycan. S164 contacts substrate. Y176 functions as the Proton acceptor in the catalytic mechanism.

This sequence belongs to the short-chain dehydrogenases/reductases (SDR) family. In terms of tissue distribution, detected in liver.

The protein resides in the microsome membrane. It is found in the early endosome membrane. It catalyses the reaction all-trans-retinol--[retinol-binding protein] + NAD(+) = all-trans-retinal--[retinol-binding protein] + NADH + H(+). The catalysed reaction is all-trans-retinol + NAD(+) = all-trans-retinal + NADH + H(+). The enzyme catalyses androsterone + NAD(+) = 5alpha-androstan-3,17-dione + NADH + H(+). It carries out the reaction testosterone + NAD(+) = androst-4-ene-3,17-dione + NADH + H(+). It catalyses the reaction 5alpha-androstane-3alpha,17beta-diol + NAD(+) = 17beta-hydroxy-5alpha-androstan-3-one + NADH + H(+). The catalysed reaction is 17beta-estradiol + NAD(+) = estrone + NADH + H(+). The enzyme catalyses 17beta-estradiol + NADP(+) = estrone + NADPH + H(+). It carries out the reaction 3alpha-hydroxy-5alpha-pregnan-20-one + NAD(+) = 5alpha-pregnane-3,20-dione + NADH + H(+). It catalyses the reaction 5alpha-androstane-3beta,17beta-diol + NAD(+) = 17beta-hydroxy-5alpha-androstan-3-one + NADH + H(+). The catalysed reaction is 3beta-hydroxy-5alpha-androstan-17-one + NAD(+) = 5alpha-androstan-3,17-dione + NADH + H(+). Inhibited by carbenoxolone and phenyl arsenoxide. NAD-dependent oxidoreductase with broad substrate specificity that shows both oxidative and reductive activity (in vitro). Has 17-beta-hydroxysteroid dehydrogenase activity towards various steroids (in vitro). Converts 5-alpha-androstan-3-alpha,17-beta-diol to androsterone and estradiol to estrone (in vitro). Has 3-alpha-hydroxysteroid dehydrogenase activity towards androsterone (in vitro). Has retinol dehydrogenase activity towards all-trans-retinol (in vitro). The chain is 17-beta-hydroxysteroid dehydrogenase type 6 (Hsd17b6) from Mus musculus (Mouse).